Reading from the N-terminus, the 91-residue chain is Small ribosomal subunit protein uS19 (91 aa).

It belongs to the universal ribosomal protein uS19 family.

Its function is as follows. Protein S19 forms a complex with S13 that binds strongly to the 16S ribosomal RNA. This chain is Small ribosomal subunit protein uS19, found in Alcanivorax borkumensis (strain ATCC 700651 / DSM 11573 / NCIMB 13689 / SK2).